A 254-amino-acid polypeptide reads, in one-letter code: Alcohol dehydrogenase 2 (254 aa).

Phenylalanine 10–leucine 33 contacts NAD(+). Serine 138 serves as a coordination point for substrate. Tyrosine 151 serves as the catalytic Proton acceptor.

Belongs to the short-chain dehydrogenases/reductases (SDR) family. As to quaternary structure, homodimer.

The catalysed reaction is a primary alcohol + NAD(+) = an aldehyde + NADH + H(+). The enzyme catalyses a secondary alcohol + NAD(+) = a ketone + NADH + H(+). This Drosophila wheeleri (Fruit fly) protein is Alcohol dehydrogenase 2 (Adh2).